Consider the following 152-residue polypeptide: Protein NrdI (152 aa).

This sequence belongs to the NrdI family.

Its function is as follows. Probably involved in ribonucleotide reductase function. The chain is Protein NrdI from Rhodococcus opacus (strain B4).